The primary structure comprises 356 residues: Biotin synthase (356 aa).

Residues 1-28 form a disordered region; the sequence is MTIQANVPTGDETSDEASRQTSNEASSE. The 226-residue stretch at 77-302 folds into the Radical SAM core domain; the sequence is EDVEVEGIIS…RTVLRYAGGR (226 aa). 3 residues coordinate [4Fe-4S] cluster: Cys92, Cys96, and Cys99. [2Fe-2S] cluster contacts are provided by Cys135, Cys168, Cys227, and Arg297.

Belongs to the radical SAM superfamily. Biotin synthase family. In terms of assembly, homodimer. [4Fe-4S] cluster serves as cofactor. Requires [2Fe-2S] cluster as cofactor.

The catalysed reaction is (4R,5S)-dethiobiotin + (sulfur carrier)-SH + 2 reduced [2Fe-2S]-[ferredoxin] + 2 S-adenosyl-L-methionine = (sulfur carrier)-H + biotin + 2 5'-deoxyadenosine + 2 L-methionine + 2 oxidized [2Fe-2S]-[ferredoxin]. It participates in cofactor biosynthesis; biotin biosynthesis; biotin from 7,8-diaminononanoate: step 2/2. In terms of biological role, catalyzes the conversion of dethiobiotin (DTB) to biotin by the insertion of a sulfur atom into dethiobiotin via a radical-based mechanism. The sequence is that of Biotin synthase from Arthrobacter sp. (strain FB24).